The chain runs to 384 residues: Gastrin-releasing peptide receptor (384 aa).

Topologically, residues 1-39 (MDPNNCSHLNLEVDPFLSCNNTFNQTLNPPKMDNWFHPG) are extracellular. N-linked (GlcNAc...) asparagine glycans are attached at residues N5, N20, and N24. A helical transmembrane segment spans residues 40–63 (IIYVIPAVYGLIIVIGLIGNITLI). At 64–77 (KIFCTVKSMRNVPN) the chain is on the cytoplasmic side. Residues 78-97 (LFISSLALGDLLLLVTCAPV) traverse the membrane as a helical segment. Residues 98 to 115 (DASKYLADRWLFGRIGCK) are Extracellular-facing. A disulfide bond links C114 and C197. The helical transmembrane segment at 116-137 (LIPFIQLTSVGVSVFTLTALSA) threads the bilayer. The Cytoplasmic segment spans residues 138–153 (DRYKAIVRPMDIQASH). Residues 154-175 (ALMKICLKAALIWIVSMLLAIP) form a helical membrane-spanning segment. Over 176 to 209 (EAVFSDLHPFHVKDTNQTFISCAPYPHSNELHPK) the chain is Extracellular. Residues 210–235 (IHSMASFLVFYIIPLSIISVYYYFIA) traverse the membrane as a helical segment. Over 236 to 265 (RNLIQSAYNLPVEGNIHVKKQIESRKRLAK) the chain is Cytoplasmic. The chain crosses the membrane as a helical span at residues 266-286 (TVLVFVGLFAFCWLPNHVIYL). The Extracellular portion of the chain corresponds to 287-299 (YRSYHYSEVDTSM). A helical transmembrane segment spans residues 300-326 (LHFITSICARLLAFTNSCVNPFALYLL). Over 327–384 (SKSFRKQFNTQLLCCQPSLLNRSHSTGRSTTCMTSFKSTNPSATFSLINGNICHEGYV) the chain is Cytoplasmic. A lipid anchor (S-palmitoyl cysteine) is attached at C340. S351 bears the Phosphoserine mark.

The protein belongs to the G-protein coupled receptor 1 family. Expressed in the hippocampal CA1 region (at protein level).

It localises to the cell membrane. Its function is as follows. Receptor for gastrin-releasing peptide (GRP). Signals via association with G proteins that activate a phosphatidylinositol-calcium second messenger system, resulting in Akt phosphorylation. Contributes to the regulation of food intake. Contributes to the perception of prurient stimuli and transmission of itch signals in the spinal cord that promote scratching behavior, but does not play a role in the perception of pain. Contributes primarily to nonhistaminergic itch sensation. In one study, shown to act in the amygdala as part of an inhibitory network which inhibits memory specifically related to learned fear. In another study, shown to contribute to disinhibition of glutamatergic cells in the auditory cortex via signaling on vasoactive intestinal peptide-expressing cells which leads to enhanced auditory fear memories. Contributes to the induction of sighing through signaling in the pre-Botzinger complex, a cluster of several thousand neurons in the ventrolateral medulla responsible for inspiration during respiratory activity. This is Gastrin-releasing peptide receptor (Grpr) from Rattus norvegicus (Rat).